Reading from the N-terminus, the 329-residue chain is Beta-ketoacyl-[acyl-carrier-protein] synthase III (329 aa).

Catalysis depends on residues cysteine 113 and histidine 255. The interval 256-260 (QANQR) is ACP-binding. Residue asparagine 285 is part of the active site.

The protein belongs to the thiolase-like superfamily. FabH family. In terms of assembly, homodimer.

The protein localises to the cytoplasm. The catalysed reaction is malonyl-[ACP] + acetyl-CoA + H(+) = 3-oxobutanoyl-[ACP] + CO2 + CoA. It participates in lipid metabolism; fatty acid biosynthesis. Catalyzes the condensation reaction of fatty acid synthesis by the addition to an acyl acceptor of two carbons from malonyl-ACP. Catalyzes the first condensation reaction which initiates fatty acid synthesis and may therefore play a role in governing the total rate of fatty acid production. Possesses both acetoacetyl-ACP synthase and acetyl transacylase activities. Its substrate specificity determines the biosynthesis of branched-chain and/or straight-chain of fatty acids. This Chlorobium phaeobacteroides (strain DSM 266 / SMG 266 / 2430) protein is Beta-ketoacyl-[acyl-carrier-protein] synthase III.